Consider the following 205-residue polypeptide: MIGRLRGTLAEKQPPHLIIDVNGVGYELEVPMTTLYRLPKVGEPVTVHTHLVVREDAHLLYGFAEKRERELFRELIRLNGVGPKLALALMSGLEVDELVRCVQAQDASVLVRVPGVGKKTAERLLVELKDRFKAWETSPAMFTLVSDGPLPVASESSAEADAVSALVSLGYKPQEASKAIAAIKDKAGLSSEELIRRSLKGMIAK.

Positions Met-1–Ala-64 are domain I. Residues Glu-65 to Thr-143 are domain II. The tract at residues Leu-144 to Ser-154 is flexible linker. The segment at Ser-154 to Lys-205 is domain III.

This sequence belongs to the RuvA family. Homotetramer. Forms an RuvA(8)-RuvB(12)-Holliday junction (HJ) complex. HJ DNA is sandwiched between 2 RuvA tetramers; dsDNA enters through RuvA and exits via RuvB. An RuvB hexamer assembles on each DNA strand where it exits the tetramer. Each RuvB hexamer is contacted by two RuvA subunits (via domain III) on 2 adjacent RuvB subunits; this complex drives branch migration. In the full resolvosome a probable DNA-RuvA(4)-RuvB(12)-RuvC(2) complex forms which resolves the HJ.

It localises to the cytoplasm. The RuvA-RuvB-RuvC complex processes Holliday junction (HJ) DNA during genetic recombination and DNA repair, while the RuvA-RuvB complex plays an important role in the rescue of blocked DNA replication forks via replication fork reversal (RFR). RuvA specifically binds to HJ cruciform DNA, conferring on it an open structure. The RuvB hexamer acts as an ATP-dependent pump, pulling dsDNA into and through the RuvAB complex. HJ branch migration allows RuvC to scan DNA until it finds its consensus sequence, where it cleaves and resolves the cruciform DNA. This Pseudomonas entomophila (strain L48) protein is Holliday junction branch migration complex subunit RuvA.